Here is a 204-residue protein sequence, read N- to C-terminus: Dof zinc finger protein DOF3.1 (204 aa).

A disordered region spans residues 1-25; the sequence is MQDPAAYYQTMMAKQQQQQQPQFAE. Residues 29–83 form a Dof-type zinc finger; that stretch reads LKCPRCDSPNTKFCYYNNYNLSQPRHFCKSCRRYWTKGGALRNVPVGGGSRKNAT. Zn(2+) is bound by residues Cys-31, Cys-34, Cys-56, and Cys-59. Disordered regions lie at residues 70–128 and 182–204; these read RNVP…TRML and RTEP…AEKN. Over residues 84–102 the composition is skewed to low complexity; that stretch reads KRSTSSSSSASSPSNSSQN. Positions 106 to 124 are enriched in basic and acidic residues; that stretch reads KNPDPDPDPRNSQKPDLDP.

The protein localises to the nucleus. Its function is as follows. Transcription factor that binds specifically to a 5'-AA[AG]G-3' consensus core sequence. The protein is Dof zinc finger protein DOF3.1 (DOF3.1) of Arabidopsis thaliana (Mouse-ear cress).